The following is a 651-amino-acid chain: Receptor-like serine/threonine-protein kinase At4g25390 (651 aa).

The first 25 residues, 1–25 (MPSRSISAPVPVLAPAPIVSSLVPA), serve as a signal peptide directing secretion. At 26-40 (APSGHQNKTTRIFPP) the chain is on the extracellular side. N32 carries N-linked (GlcNAc...) asparagine glycosylation. Residues 41-61 (FVVAGAGAGFSLFITLSVCFC) traverse the membrane as a helical segment. Over 62–651 (KFSRKRSSPP…PLKTTRKQRR (590 aa)) the chain is Cytoplasmic. The interval 66-87 (KRSSPPAENASSSPRRPSPREF) is disordered. A compositionally biased stretch (low complexity) spans 69–87 (SPPAENASSSPRRPSPREF). In terms of domain architecture, Protein kinase spans 99-633 (FSQANRLGQG…LKGEVNLPEL (535 aa)). Residues 105–113 (LGQGGFGVV) and K127 each bind ATP. Catalysis depends on D225, which acts as the Proton acceptor.

Belongs to the protein kinase superfamily. Ser/Thr protein kinase family.

The protein resides in the cell membrane. The catalysed reaction is L-seryl-[protein] + ATP = O-phospho-L-seryl-[protein] + ADP + H(+). It catalyses the reaction L-threonyl-[protein] + ATP = O-phospho-L-threonyl-[protein] + ADP + H(+). This is Receptor-like serine/threonine-protein kinase At4g25390 from Arabidopsis thaliana (Mouse-ear cress).